The sequence spans 1318 residues: DNA-directed RNA polymerase subunit beta' (1318 aa).

Cys221, Cys295, Cys302, and Cys305 together coordinate Zn(2+).

Belongs to the RNA polymerase beta' chain family. RpoC2 subfamily. As to quaternary structure, in cyanobacteria the RNAP catalytic core is composed of 2 alpha, 1 beta, 1 beta', 1 gamma and 1 omega subunit. When a sigma factor is associated with the core the holoenzyme is formed, which can initiate transcription. Zn(2+) serves as cofactor.

It carries out the reaction RNA(n) + a ribonucleoside 5'-triphosphate = RNA(n+1) + diphosphate. Functionally, DNA-dependent RNA polymerase catalyzes the transcription of DNA into RNA using the four ribonucleoside triphosphates as substrates. The sequence is that of DNA-directed RNA polymerase subunit beta' from Synechococcus elongatus (strain ATCC 33912 / PCC 7942 / FACHB-805) (Anacystis nidulans R2).